The chain runs to 159 residues: Putative 4-hydroxy-4-methyl-2-oxoglutarate aldolase (159 aa).

Substrate contacts are provided by residues 75–78 and Arg-97; that span reads GDQL. Asp-98 provides a ligand contact to a divalent metal cation.

This sequence belongs to the class II aldolase/RraA-like family. As to quaternary structure, homotrimer. It depends on a divalent metal cation as a cofactor.

It catalyses the reaction 4-hydroxy-4-methyl-2-oxoglutarate = 2 pyruvate. The enzyme catalyses oxaloacetate + H(+) = pyruvate + CO2. In terms of biological role, catalyzes the aldol cleavage of 4-hydroxy-4-methyl-2-oxoglutarate (HMG) into 2 molecules of pyruvate. Also contains a secondary oxaloacetate (OAA) decarboxylase activity due to the common pyruvate enolate transition state formed following C-C bond cleavage in the retro-aldol and decarboxylation reactions. This Laribacter hongkongensis (strain HLHK9) protein is Putative 4-hydroxy-4-methyl-2-oxoglutarate aldolase.